Consider the following 353-residue polypeptide: C-X-C chemokine receptor type 4 (353 aa).

Residues 1 to 22 (MEGIRIFTSDNYTEDDLGSGDY) form an important for chemokine binding and signaling region. Topologically, residues 1–39 (MEGIRIFTSDNYTEDDLGSGDYDSMKEPCFREENAHFNR) are extracellular. Residue N11 is glycosylated (N-linked (GlcNAc...) asparagine). Residue Y12 is modified to Sulfotyrosine. O-linked (Xyl...) (chondroitin sulfate) serine glycosylation is present at S19. Position 22 is a sulfotyrosine (Y22). Cystine bridges form between C29/C275 and C110/C187. The helical transmembrane segment at 40–64 (IFLPTVYSIIFLTGIVGNGLVILVM) threads the bilayer. The Cytoplasmic segment spans residues 65–78 (GYQKKLRSMTDKYR). A helical transmembrane segment spans residues 79-100 (LHLSVADLLFVLTLPFWAVDAV). The interval 95–98 (WAVD) is chemokine binding. Over 101-111 (ANWYFGKFLCK) the chain is Extracellular. A helical transmembrane segment spans residues 112–131 (AVHVIYTVNLYSSVLILAFI). Positions 114-118 (HVIYT) are chemokine binding. Residues 132-155 (SLDRYLAIVHATNSQKPRKLLAEK) lie on the Cytoplasmic side of the membrane. Positions 134 to 136 (DRY) match the Important for signaling motif. The tract at residues 136–148 (YLAIVHATNSQKP) is involved in dimerization; when bound to chemokine. The chain crosses the membrane as a helical span at residues 156–175 (VVYVGVWLPAVLLTIPDLIF). The Extracellular portion of the chain corresponds to 176 to 196 (ADIKEVDERYICDRFYPSDLW). The segment at 187–191 (CDRFY) is chemokine binding, important for signaling. The tract at residues 192–211 (PSDLWLVVFQFQHIVVGLLL) is involved in dimerization. A helical membrane pass occupies residues 197–217 (LVVFQFQHIVVGLLLPGIVIL). The Cytoplasmic portion of the chain corresponds to 218–242 (SCYCIIISKLSHSKGYQKRKALKTT). A helical membrane pass occupies residues 243-262 (VILILTFFACWLPYYIGISI). At 263–283 (DSFILLEIIQQGCEFESTVHK) the chain is on the extracellular side. Residues 267–269 (LLE) are involved in dimerization. A helical transmembrane segment spans residues 284–303 (WISITEALAFFHCCLNPILY). The Cytoplasmic portion of the chain corresponds to 304–353 (AFLGAKFKTSAQHALTSVSRGSSLKILSKGKRGGHSSVSTESESSSFHSS). Phosphoserine occurs at positions 320 and 322. Residues S325 and S326 each carry the phosphoserine; by PKC and GRK6 modification. Residues 330–353 (LSKGKRGGHSSVSTESESSSFHSS) are disordered. S331 is subject to Phosphoserine; by GRK6. A Glycyl lysine isopeptide (Lys-Gly) (interchain with G-Cter in ubiquitin) cross-link involves residue K332. Residues 338–353 (HSSVSTESESSSFHSS) are compositionally biased toward low complexity. S340 is subject to Phosphoserine; by GRK6. Phosphoserine is present on residues S349 and S352.

It belongs to the G-protein coupled receptor 1 family. In terms of assembly, monomer. Can form homodimers. Interacts with CD164. Interacts with ARRB2; the interaction is dependent on the C-terminal phosphorylation of CXCR4 and allows activation of MAPK1 and MAPK3. Interacts with ARR3; the interaction is dependent on the C-terminal phosphorylation of CXCR4 and modulates calcium mobilization. Interacts with RNF113A; the interaction, enhanced by CXCL12, promotes CXCR4 ubiquitination and subsequent degradation. Interacts (via the cytoplasmic C-terminal) with ITCH (via the WW domains I and II); the interaction, enhanced by CXCL12, promotes CXCR4 ubiquitination and leads to its degradation. Interacts with extracellular ubiquitin. Interacts with DBN1; this interaction is enhanced by antigenic stimulation. Following LPS binding, may form a complex with GDF5, HSP90AA1 and HSPA8. In terms of processing, phosphorylated on agonist stimulation. Rapidly phosphorylated on serine and threonine residues in the C-terminal. Phosphorylation at Ser-325 and Ser-326 leads to recruitment of ITCH, ubiquitination and protein degradation. Post-translationally, ubiquitinated after ligand binding, leading to its degradation. Ubiquitinated by ITCH at the cell membrane on agonist stimulation. The ubiquitin-dependent mechanism, endosomal sorting complex required for transport (ESCRT), then targets CXCR4 for lysosomal degradation. This process is dependent also on prior Ser-/Thr-phosphorylation in the C-terminal of CXCR4. Also binding of ARRB1 to STAM negatively regulates CXCR4 sorting to lysosomes though modulating ubiquitination of SFR5S. Sulfation is required for efficient binding of CXCL12/SDF-1alpha and promotes its dimerization. In terms of processing, O- and N-glycosylated. N-glycosylation can mask coreceptor function. The O-glycosylation chondroitin sulfate attachment does not affect interaction with CXCL12/SDF-1alpha nor its coreceptor activity. In terms of tissue distribution, brain, heart, kidney, lung and liver.

Its subcellular location is the cell membrane. It is found in the cell junction. It localises to the early endosome. The protein localises to the late endosome. The protein resides in the lysosome. Receptor for the C-X-C chemokine CXCL12/SDF-1 that transduces a signal by increasing intracellular calcium ion levels and enhancing MAPK1/MAPK3 activation. Involved in the AKT signaling cascade. Plays a role in regulation of cell migration, e.g. during wound healing. Acts as a receptor for extracellular ubiquitin; leading to enhanced intracellular calcium ions and reduced cellular cAMP levels. Binds bacterial lipopolysaccharide (LPS) et mediates LPS-induced inflammatory response, including TNF secretion by monocytes. Involved in hematopoiesis and in cardiac ventricular septum formation. Also plays an essential role in vascularization of the gastrointestinal tract, probably by regulating vascular branching and/or remodeling processes in endothelial cells. Involved in cerebellar development. In the CNS, could mediate hippocampal-neuron survival. This chain is C-X-C chemokine receptor type 4 (CXCR4), found in Bos taurus (Bovine).